Consider the following 941-residue polypeptide: Glycine dehydrogenase (decarboxylating) (941 aa).

Lys692 carries the N6-(pyridoxal phosphate)lysine modification.

The protein belongs to the GcvP family. In terms of assembly, the glycine cleavage system is composed of four proteins: P, T, L and H. Requires pyridoxal 5'-phosphate as cofactor.

The catalysed reaction is N(6)-[(R)-lipoyl]-L-lysyl-[glycine-cleavage complex H protein] + glycine + H(+) = N(6)-[(R)-S(8)-aminomethyldihydrolipoyl]-L-lysyl-[glycine-cleavage complex H protein] + CO2. Its function is as follows. The glycine cleavage system catalyzes the degradation of glycine. The P protein binds the alpha-amino group of glycine through its pyridoxal phosphate cofactor; CO(2) is released and the remaining methylamine moiety is then transferred to the lipoamide cofactor of the H protein. This Mycobacterium avium (strain 104) protein is Glycine dehydrogenase (decarboxylating).